Here is a 172-residue protein sequence, read N- to C-terminus: Peptidyl-prolyl cis-trans isomerase (172 aa).

One can recognise a PPIase cyclophilin-type domain in the interval 7–170; that stretch reads FFDMSVGGQP…KKVVVEDCGQ (164 aa).

It belongs to the cyclophilin-type PPIase family. Not glycosylated. In terms of tissue distribution, expressed in pollen.

The protein resides in the cytoplasm. It catalyses the reaction [protein]-peptidylproline (omega=180) = [protein]-peptidylproline (omega=0). With respect to regulation, binds cyclosporin A (CsA). CsA mediates some of its effects via an inhibitory action on PPIase. Its function is as follows. PPIases accelerate the folding of proteins. It catalyzes the cis-trans isomerization of proline imidic peptide bonds in oligopeptides. The chain is Peptidyl-prolyl cis-trans isomerase (PCKR1) from Catharanthus roseus (Madagascar periwinkle).